The following is a 656-amino-acid chain: CXXC-type zinc finger protein 1 (656 aa).

M1 carries the post-translational modification N-acetylmethionine. Residues 1–14 are compositionally biased toward acidic residues; it reads MEGDGSDPEPPDAG. A disordered region spans residues 1–20; sequence MEGDGSDPEPPDAGEDSKSE. S6 and S19 each carry phosphoserine. A PHD-type zinc finger spans residues 28 to 76; that stretch reads YCICRKPDINCFMIGCDNCNEWFHGDCIRITEKMAKAIREWYCRECREK. A disordered region spans residues 84-162; the sequence is YRHKKSRERD…QHHQQQQQQI (79 aa). Residues 90–120 are compositionally biased toward basic and acidic residues; the sequence is RERDGNERDSSEPRDEGGGRKRPVPDPDLQR. S124 bears the Phosphoserine mark. A CXXC-type zinc finger spans residues 160–209; that stretch reads QQIKRSARMCGECEACRRTEDCGHCDFCRDMKKFGGPNKIRQKCRLRQCQ. 8 residues coordinate Zn(2+): C169, C172, C175, C181, C184, C187, C203, and C208. 2 disordered regions span residues 219–287 and 311–373; these read FPSS…LPLD and EESP…ASLP. A Phosphoserine modification is found at S224. At T227 the chain carries Phosphothreonine. Residues 239–249 show a composition bias toward low complexity; that stretch reads LPTQQQPQPSQ. Residue K250 forms a Glycyl lysine isopeptide (Lys-Gly) (interchain with G-Cter in SUMO2) linkage. The span at 321–334 shows a compositional bias: basic residues; it reads RKRAVKVKHVKRRE. The segment covering 335–345 has biased composition (basic and acidic residues); the sequence is KKSEKKKEERY. The span at 346–358 shows a compositional bias: basic residues; it reads KRHRQKQKHKDKW. Basic and acidic residues predominate over residues 359–368; it reads KHPERADAKD. Positions 422–474 form a coiled coil; it reads AEEHGKKLLERIRREQQSARTRLQEMERRFHELEAIILRAKQQAVREDEESNE.

Component of the SET1 complex, at least composed of the catalytic subunit (SETD1A or SETD1B), WDR5, WDR82, RBBP5, ASH2L/ASH2, CXXC1/CFP1 HCFC1 and DPY30. Interacts with SETD1A. Interacts with ZNF335. Interacts with PRDM9; this interaction does not link PRDM9-activated recombination hotspot sites with DSB machinery and is not required for the hotspot recognition pathway. Interacts with histone H3K4me3. Post-translationally, may be regulated by proteolysis. As to expression, ubiquitous.

Its subcellular location is the nucleus speckle. The protein localises to the nucleus. In terms of biological role, transcriptional activator that exhibits a unique DNA binding specificity for CpG unmethylated motifs with a preference for CpGG. This is CXXC-type zinc finger protein 1 (CXXC1) from Homo sapiens (Human).